The sequence spans 466 residues: Cell division protein FtsP (466 aa).

A signal peptide (tat-type signal) is located at residues 1–28 (MGNYSRRRFLQGSLAIVAGNVLPCAAMA).

This sequence belongs to the FtsP family. In terms of processing, predicted to be exported by the Tat system. The position of the signal peptide cleavage has not been experimentally proven.

The protein resides in the periplasm. Its function is as follows. Cell division protein that is required for growth during stress conditions. May be involved in protecting or stabilizing the divisomal assembly under conditions of stress. This is Cell division protein FtsP from Gallibacterium anatis (strain UMN179) (Pasteurella anatis).